The following is a 496-amino-acid chain: Lysine--tRNA ligase (496 aa).

2 residues coordinate Mg(2+): glutamate 408 and glutamate 415.

The protein belongs to the class-II aminoacyl-tRNA synthetase family. In terms of assembly, homodimer. Mg(2+) is required as a cofactor.

The protein resides in the cytoplasm. It carries out the reaction tRNA(Lys) + L-lysine + ATP = L-lysyl-tRNA(Lys) + AMP + diphosphate. The sequence is that of Lysine--tRNA ligase from Legionella pneumophila (strain Corby).